Reading from the N-terminus, the 237-residue chain is Pyridoxal phosphate homeostasis protein (237 aa).

Lysine 31 carries the N6-(pyridoxal phosphate)lysine modification.

It belongs to the pyridoxal phosphate-binding protein YggS/PROSC family.

The protein resides in the cytoplasm. The protein localises to the nucleus. In terms of biological role, pyridoxal 5'-phosphate (PLP)-binding protein, which may be involved in intracellular homeostatic regulation of pyridoxal 5'-phosphate (PLP), the active form of vitamin B6. The sequence is that of Pyridoxal phosphate homeostasis protein from Schizosaccharomyces pombe (strain 972 / ATCC 24843) (Fission yeast).